The following is a 176-amino-acid chain: Dual-action ribosomal maturation protein DarP (176 aa).

A compositionally biased stretch (acidic residues) spans 1–16 (MRLIDPDADLEFDPDS). The interval 1–29 (MRLIDPDADLEFDPDSVYDGPSKSQKKRE) is disordered.

Belongs to the DarP family.

It is found in the cytoplasm. In terms of biological role, member of a network of 50S ribosomal subunit biogenesis factors which assembles along the 30S-50S interface, preventing incorrect 23S rRNA structures from forming. Promotes peptidyl transferase center (PTC) maturation. This is Dual-action ribosomal maturation protein DarP from Thiobacillus denitrificans (strain ATCC 25259 / T1).